The sequence spans 775 residues: Melanoma-associated antigen D1 (775 aa).

The tract at residues 37-330 (SEAPPTSQAT…PARQTPSAWQ (294 aa)) is disordered. A compositionally biased stretch (low complexity) spans 39-50 (APPTSQATAAAS). Polar residues-rich tracts occupy residues 52-63 (PNASPQSSQPPT), 84-100 (KAQNATTKGPNDYSQAR), 107-120 (KNQSKAAFKSQNGT), 149-178 (GQNSTKAGPGTTYNFPQSPSANEMTNNQPK), 221-235 (AQTSADGSQTQNVES), 247-258 (VNNLNVEENNSG), and 296-308 (LAWQNPSGWQNQT). A run of 19 repeats spans residues 292-297 (WQTPLA), 298-303 (WQNPSG), 304-309 (WQNQTA), 329-334 (WQNPVA), 335-340 (WQNPVI), 341-346 (WPNPVI), 347-352 (WQNPVI), 353-358 (WPNPIV), 359-364 (WPGPIV), 365-370 (WPNPMA), 371-376 (WQSTPG), 377-382 (WQSPPS), 383-388 (WQAPPS), 389-394 (WQSPQD), 395-400 (WQGPPD), 401-406 (WQVPPD), 407-412 (WSMPPD), 413-418 (WSFPSD), and 419-424 (WPFPPD). The segment at 292 to 441 (WQTPLAWQNP…IPPDWQNLRP (150 aa)) is 22 X 6 AA tandem repeats of W-[PQ]-X-P-X-X. A compositionally biased stretch (low complexity) spans 309–326 (ARQTPPAARQSPPARQTP). Residues 374-409 (TPGWQSPPSWQAPPSWQSPQDWQGPPDWQVPPDWSM) form a disordered region. Low complexity predominate over residues 375-406 (PGWQSPPSWQAPPSWQSPQDWQGPPDWQVPPD). The 20; approximate repeat unit spans residues 425–429 (WIPAD). A run of 2 repeats spans residues 430–435 (WPIPPD) and 436–441 (WQNLRP). Residues 437–452 (QNLRPSPNLRSSSNSR) show a composition bias toward low complexity. The interval 437 to 463 (QNLRPSPNLRSSSNSRASQNQGPPQPR) is disordered. One can recognise an MAGE domain in the interval 468-666 (LQERANKLVK…RDWTAQFMEA (199 aa)).

As to quaternary structure, interacts with DLX5, DLX7 and MSX2 and forms homomultimers. Interacts with UNC5A. Interacts with TRIM28 and PJA1. Interacts with NGFR/p75NTR and RORA. In terms of tissue distribution, ubiquitously expressed in many adult tissues, except for the spleen. Expressed in osteoblastic and chondrogenic cell lines and also during embryonic development.

It is found in the nucleus. The protein resides in the cytoplasm. It localises to the cell membrane. Functionally, involved in the apoptotic response after nerve growth factor (NGF) binding in neuronal cells. Inhibits cell cycle progression, and facilitates NGFR-mediated apoptosis. May act as a regulator of the function of DLX family members. May enhance ubiquitin ligase activity of RING-type zinc finger-containing E3 ubiquitin-protein ligases. Proposed to act through recruitment and/or stabilization of the Ubl-conjugating enzyme (E2) at the E3:substrate complex. Plays a role in the circadian rhythm regulation. May act as RORA coregulator, modulating the expression of core clock genes such as BMAL1 and NFIL3, induced, or NR1D1, repressed. The sequence is that of Melanoma-associated antigen D1 (Maged1) from Mus musculus (Mouse).